Consider the following 292-residue polypeptide: Ribosomal protein L11 methyltransferase (292 aa).

S-adenosyl-L-methionine is bound by residues Thr-144, Gly-165, Asp-187, and Asn-229.

This sequence belongs to the methyltransferase superfamily. PrmA family.

Its subcellular location is the cytoplasm. The enzyme catalyses L-lysyl-[protein] + 3 S-adenosyl-L-methionine = N(6),N(6),N(6)-trimethyl-L-lysyl-[protein] + 3 S-adenosyl-L-homocysteine + 3 H(+). In terms of biological role, methylates ribosomal protein L11. The chain is Ribosomal protein L11 methyltransferase from Pseudomonas putida (strain GB-1).